The primary structure comprises 353 residues: N-terminal EF-hand calcium-binding protein 3 (353 aa).

The EF-hand domain occupies 27–62; the sequence is AGHALFQDVFRRADKNDDGKLSFEEFQNYFADGVLS. Residues Asp40, Asn42, Asp44, Lys46, and Glu51 each contribute to the Ca(2+) site. Positions 172–181 are required for interaction with APBA3; the sequence is IKAQSRPCGS. The segment covering 193–203 has biased composition (low complexity); that stretch reads SWSPSWSPGSS. Residues 193–213 are disordered; the sequence is SWSPSWSPGSSDTGRSSEAEQ. Residues 204-213 show a composition bias toward polar residues; sequence DTGRSSEAEQ. Positions 253 to 342 constitute an ABM domain; the sequence is LVAQRQVQVA…QAPDTLTTVF (90 aa).

As to quaternary structure, interacts with the N-terminal domain of APBA2. Interacts with NEK2. Interacts with APBA3; APBA3 seems to mediate the interaction between NECAB3 and HIF1AN. In terms of processing, phosphorylated by NEK2. Widely expressed, with highest levels in the brain.

It localises to the golgi apparatus. Its function is as follows. Inhibits the interaction of APBA2 with amyloid-beta precursor protein (APP), and hence allows formation of amyloid-beta. May enhance the activity of HIF1A and thus promote glycolysis under normoxic conditions; the function requires its ABM domain and may implicate the stabilization of the interaction between HIF1AN and APBA3. This chain is N-terminal EF-hand calcium-binding protein 3 (Necab3), found in Mus musculus (Mouse).